We begin with the raw amino-acid sequence, 245 residues long: tRNA pseudouridine synthase A 2 (245 aa).

Residue D53 is the Nucleophile of the active site. Y111 is a substrate binding site.

It belongs to the tRNA pseudouridine synthase TruA family. Homodimer.

It carries out the reaction uridine(38/39/40) in tRNA = pseudouridine(38/39/40) in tRNA. Formation of pseudouridine at positions 38, 39 and 40 in the anticodon stem and loop of transfer RNAs. This Bacillus anthracis protein is tRNA pseudouridine synthase A 2.